Here is an 849-residue protein sequence, read N- to C-terminus: SMY2 homolog 2 (849 aa).

The GYF domain maps to 149–205 (ESQWKYIDSNGNIQGPFGTNNMSQWYQGGYFTPTLQICRLATSPEPFGVNDRFIRLG). Disordered stretches follow at residues 305–505 (APLS…TTNL), 527–547 (DLKK…QLDR), 593–612 (TKIN…IKPD), and 634–661 (NRAS…NTSN). A compositionally biased stretch (low complexity) spans 308-318 (STTSSRSNKTT). Basic and acidic residues predominate over residues 319 to 331 (SSHEEKVPSHEEA). Threonine 350 is modified (phosphothreonine). Composition is skewed to basic and acidic residues over residues 361–375 (TKQE…KEQN), 387–403 (VDRK…KSKD), and 425–443 (LLEE…EEQR). Residues 410 to 484 (EEQKRFAKAE…EKQKELLNNI (75 aa)) are a coiled coil. Residues 444 to 455 (KLKKEKKLKQKQ) show a composition bias toward basic residues. Positions 456–479 (KKEEEKLKKKKKEEGKLEKEKQKE) are enriched in basic and acidic residues. Positions 483-505 (NILTGDTETPSSENTATSITTNL) are enriched in polar residues. Residues 594 to 605 (KINSQSKINKAN) are compositionally biased toward polar residues. Low complexity predominate over residues 644–661 (SRTPSPSSSALNSSNTSN).

Belongs to the SMY2/mpd2 family. Interacts with ribosomes. Interacts with EAP1 and MSL5 (via the GYP domain).

It localises to the cytoplasm. The protein is SMY2 homolog 2 (SYH1) of Saccharomyces cerevisiae (strain ATCC 204508 / S288c) (Baker's yeast).